Here is a 749-residue protein sequence, read N- to C-terminus: Protein lin-54 homolog (749 aa).

Residue Lys-139 forms a Glycyl lysine isopeptide (Lys-Gly) (interchain with G-Cter in SUMO2) linkage. 2 positions are modified to N6-acetyllysine: Lys-244 and Lys-249. Residues Ser-264, Ser-282, Ser-310, and Ser-314 each carry the phosphoserine modification. Lys-357 participates in a covalent cross-link: Glycyl lysine isopeptide (Lys-Gly) (interchain with G-Cter in SUMO2). Residues 521-634 enclose the CRC domain; it reads PRKPCNCTKS…KCIGCKNFEE (114 aa). The DNA-binding stretch occupies residues 523 to 536; the sequence is KPCNCTKSLCLKLY. Zn(2+)-binding residues include Cys-525, Cys-527, Cys-532, Cys-537, Cys-539, Cys-546, Cys-549, Cys-551, and Cys-554. The linker stretch occupies residues 583–596; it reads IGKGKEGESDRRHS. Zn(2+) is bound by residues Cys-599, Cys-601, Cys-606, Cys-611, Cys-613, Cys-620, Cys-624, Cys-626, and Cys-629. The interval 599–612 is DNA-binding; sequence CNCKRSGCLKNYCE. Ser-635 carries the phosphoserine modification. Residues Lys-639, Lys-659, and Lys-661 each participate in a glycyl lysine isopeptide (Lys-Gly) (interchain with G-Cter in SUMO2) cross-link.

The protein belongs to the lin-54 family. In terms of assembly, component of the DREAM complex (also named LINC complex) at least composed of E2F4, E2F5, LIN9, LIN37, LIN52, LIN54, MYBL1, MYBL2, RBL1, RBL2, RBBP4, RBL2, TFDP1 and TFDP2. The complex exists in quiescent cells where it represses cell cycle-dependent genes. It dissociates in S phase when LIN9, LIN37, LIN52 and LIN54 form a subcomplex that binds to MYBL2.

The protein resides in the nucleus. Component of the DREAM complex, a multiprotein complex that can both act as a transcription activator or repressor depending on the context. In G0 phase, the complex binds to more than 800 promoters and is required for repression of E2F target genes. In S phase, the complex selectively binds to the promoters of G2/M genes whose products are required for mitosis and participates in their cell cycle dependent activation. In the complex, acts as a DNA-binding protein that binds the promoter of CDK1 in a sequence-specific manner. Specifically recognizes the consensus motif 5'-TTYRAA-3' in target DNA. The protein is Protein lin-54 homolog (Lin54) of Rattus norvegicus (Rat).